Reading from the N-terminus, the 482-residue chain is Dual specificity protein phosphatase 10 (482 aa).

The 118-residue stretch at P168–D285 folds into the Rhodanese domain. Residues K199–L215 are interaction with MAP kinases. Residues E321–N464 enclose the Tyrosine-protein phosphatase domain. C408 (phosphocysteine intermediate) is an active-site residue.

This sequence belongs to the protein-tyrosine phosphatase family. Non-receptor class dual specificity subfamily. In terms of assembly, monomer. Interacts with MAPK14.

Its subcellular location is the cytoplasm. It localises to the nucleus. It carries out the reaction O-phospho-L-tyrosyl-[protein] + H2O = L-tyrosyl-[protein] + phosphate. It catalyses the reaction O-phospho-L-seryl-[protein] + H2O = L-seryl-[protein] + phosphate. The enzyme catalyses O-phospho-L-threonyl-[protein] + H2O = L-threonyl-[protein] + phosphate. Its function is as follows. Protein phosphatase involved in the inactivation of MAP kinases. Has a specificity for the MAPK11/MAPK12/MAPK13/MAPK14 subfamily. It preferably dephosphorylates p38. The sequence is that of Dual specificity protein phosphatase 10 (DUSP10) from Bos taurus (Bovine).